The following is a 64-amino-acid chain: Small ribosomal subunit protein bS21 (64 aa).

This sequence belongs to the bacterial ribosomal protein bS21 family.

The chain is Small ribosomal subunit protein bS21 from Pelagibacter ubique (strain HTCC1062).